The sequence spans 214 residues: DNA-directed RNA polymerase subunit alpha (214 aa).

The protein belongs to the RNA polymerase alpha chain family. As to quaternary structure, in plastids the minimal PEP RNA polymerase catalytic core is composed of four subunits: alpha, beta, beta', and beta''. When a (nuclear-encoded) sigma factor is associated with the core the holoenzyme is formed, which can initiate transcription.

It is found in the plastid. Its subcellular location is the chloroplast. The enzyme catalyses RNA(n) + a ribonucleoside 5'-triphosphate = RNA(n+1) + diphosphate. Functionally, DNA-dependent RNA polymerase catalyzes the transcription of DNA into RNA using the four ribonucleoside triphosphates as substrates. This Euglena viridis (Cercaria viridis) protein is DNA-directed RNA polymerase subunit alpha (rpoA).